We begin with the raw amino-acid sequence, 251 residues long: Phosphate import ATP-binding protein PstB 2 (251 aa).

An ABC transporter domain is found at 6-246 (FNIENLDLFY…PRDDRTRGYV (241 aa)). ATP is bound at residue 38–45 (GPSGCGKS).

It belongs to the ABC transporter superfamily. Phosphate importer (TC 3.A.1.7) family. In terms of assembly, the complex is composed of two ATP-binding proteins (PstB), two transmembrane proteins (PstC and PstA) and a solute-binding protein (PstS).

It localises to the cell inner membrane. It carries out the reaction phosphate(out) + ATP + H2O = ADP + 2 phosphate(in) + H(+). Part of the ABC transporter complex PstSACB involved in phosphate import. Responsible for energy coupling to the transport system. The protein is Phosphate import ATP-binding protein PstB 2 of Vibrio cholerae serotype O1 (strain ATCC 39315 / El Tor Inaba N16961).